Consider the following 304-residue polypeptide: Putative S-adenosyl-L-methionine-dependent methyltransferase MSMEG_1482/MSMEI_1446 (304 aa).

Residues Asp-130 and 159–160 contribute to the S-adenosyl-L-methionine site; that span reads DL.

It belongs to the UPF0677 family.

Its function is as follows. Exhibits S-adenosyl-L-methionine-dependent methyltransferase activity. The sequence is that of Putative S-adenosyl-L-methionine-dependent methyltransferase MSMEG_1482/MSMEI_1446 from Mycolicibacterium smegmatis (strain ATCC 700084 / mc(2)155) (Mycobacterium smegmatis).